Here is a 433-residue protein sequence, read N- to C-terminus: Peptidoglycan glycosyltransferase RodA (433 aa).

Transmembrane regions (helical) follow at residues 9 to 29, 44 to 64, 74 to 94, 100 to 120, 158 to 178, 181 to 201, 221 to 241, 249 to 269, 295 to 315, 341 to 361, 378 to 398, and 400 to 420; these read FDYL…LFIY, YLKQ…VSMY, TLIF…GRYV, WIGV…AYIL, LGTA…AGFP, LIFA…LPLW, LSLF…VGYL, YWIT…LLGV, WHII…MGYL, WGFV…LHTL, GVLG…MGIM, and ITGI…TAMI.

It belongs to the SEDS family. MrdB/RodA subfamily.

The protein localises to the cell inner membrane. The catalysed reaction is [GlcNAc-(1-&gt;4)-Mur2Ac(oyl-L-Ala-gamma-D-Glu-L-Lys-D-Ala-D-Ala)](n)-di-trans,octa-cis-undecaprenyl diphosphate + beta-D-GlcNAc-(1-&gt;4)-Mur2Ac(oyl-L-Ala-gamma-D-Glu-L-Lys-D-Ala-D-Ala)-di-trans,octa-cis-undecaprenyl diphosphate = [GlcNAc-(1-&gt;4)-Mur2Ac(oyl-L-Ala-gamma-D-Glu-L-Lys-D-Ala-D-Ala)](n+1)-di-trans,octa-cis-undecaprenyl diphosphate + di-trans,octa-cis-undecaprenyl diphosphate + H(+). The protein operates within cell wall biogenesis; peptidoglycan biosynthesis. In terms of biological role, peptidoglycan polymerase that is essential for cell wall elongation. In Treponema pallidum (strain Nichols), this protein is Peptidoglycan glycosyltransferase RodA.